The chain runs to 353 residues: Tetraacyldisaccharide 4'-kinase (353 aa).

Position 49 to 56 (49 to 56 (TAGGTGKT)) interacts with ATP.

This sequence belongs to the LpxK family.

It catalyses the reaction a lipid A disaccharide + ATP = a lipid IVA + ADP + H(+). The protein operates within glycolipid biosynthesis; lipid IV(A) biosynthesis; lipid IV(A) from (3R)-3-hydroxytetradecanoyl-[acyl-carrier-protein] and UDP-N-acetyl-alpha-D-glucosamine: step 6/6. In terms of biological role, transfers the gamma-phosphate of ATP to the 4'-position of a tetraacyldisaccharide 1-phosphate intermediate (termed DS-1-P) to form tetraacyldisaccharide 1,4'-bis-phosphate (lipid IVA). This chain is Tetraacyldisaccharide 4'-kinase, found in Chlorobium phaeovibrioides (strain DSM 265 / 1930) (Prosthecochloris vibrioformis (strain DSM 265)).